Here is a 493-residue protein sequence, read N- to C-terminus: F(420)H(2) dehydrogenase subunit N (493 aa).

Helical transmembrane passes span 7 to 27 (LAPE…GVFL), 34 to 54 (ILGY…VKSF), 78 to 98 (LSQF…IASI), 107 to 127 (TEEF…VASA), 130 to 150 (LILL…LAGF), 165 to 185 (FVIG…VYGA), 205 to 225 (PIGI…MALV), 244 to 264 (ALLA…VFII), 273 to 293 (WQFM…VVAV), 310 to 330 (AGYI…GGIM), 333 to 353 (LAHA…VWMI), 381 to 401 (ALCM…AGFM), 404 to 424 (FVLF…IAIL), and 454 to 474 (IPFP…VMGL).

Belongs to the complex I subunit 2 family. As to quaternary structure, the FPO complex is composed of at least 13 different subunits. FpoA, FpoH, FpoJ, FpoK, FpoL, FpoM and FpoN proteins constitute the membrane sector of the complex.

The protein localises to the cell membrane. The enzyme catalyses methanophenazine + reduced coenzyme F420-(gamma-L-Glu)(n) = dihydromethanophenazine + oxidized coenzyme F420-(gamma-L-Glu)(n) + H(+). In terms of biological role, component of the F(420)H(2) dehydrogenase (FPO complex) which is part of the energy-conserving F(420)H(2):heterodisulfide oxidoreductase system. The membrane-bound electron transfer system of the complex plays an important role in the metabolism of methylotrophic methanogens when the organisms grow on methanol or methylamines. Catalyzes the oxidation of methanophenazine to dihydromethanophenazine. It shuttles electrons from F(420)H(2), via FAD and iron-sulfur (Fe-S) centers, to methanophenazine (an electron carrier in the membrane). It couples the redox reaction to proton translocation (for every two electrons transferred, two hydrogen ions are translocated across the cytoplasmic membrane), and thus conserves the redox energy in a proton gradient. It also catalyzes the oxidation of F(420)H(2) with quinones such as 2,3-dimethyl-1,4-naphthoquinone, 2-methyl-1,4-naphthoquinone and tetramethyl-p-benzoquinone. In Methanosarcina mazei (strain ATCC BAA-159 / DSM 3647 / Goe1 / Go1 / JCM 11833 / OCM 88) (Methanosarcina frisia), this protein is F(420)H(2) dehydrogenase subunit N (fpoN).